The primary structure comprises 166 residues: Cofilin-1 (166 aa).

Residue Ala2 is modified to N-acetylalanine. A phosphoserine mark is found at Ser3 and Ser8. The ADF-H domain maps to 4 to 153 (GVAVSDGVIK…KDRCTLAEKL (150 aa)). The residue at position 13 (Lys13) is an N6-acetyllysine. At Thr25 the chain carries Phosphothreonine. The Nuclear localization signal signature appears at 30–34 (KKRKK). Ser41 carries the phosphoserine modification. Thr63 carries the post-translational modification Phosphothreonine. Tyr68 is modified (phosphotyrosine). Lys73 is modified (N6-acetyllysine). Residue Tyr82 is modified to Phosphotyrosine. Lys132 participates in a covalent cross-link: Glycyl lysine isopeptide (Lys-Gly) (interchain with G-Cter in SUMO2). A Phosphotyrosine modification is found at Tyr140. Lys144 is modified (N6-acetyllysine). Phosphoserine is present on Ser156.

Belongs to the actin-binding proteins ADF family. In terms of assembly, can bind G- and F-actin in a 1:1 ratio of cofilin to actin. It is a major component of intranuclear and cytoplasmic actin rods. Interacts with the subcortical maternal complex (SCMC) via interaction with TLE6 and NLRP5. Interacts with C9orf72. In terms of processing, inactivated by phosphorylation on Ser-3. Phosphorylated on Ser-3 in resting cells. Dephosphorylated by PDXP/chronophin; this restores its activity in promoting actin filament depolymerization. The phosphorylation of Ser-24 may prevent recognition of the nuclear localization signal. Phosphorylated via a ARRB1-RAC1-LIMK1-PAK1 cascade upon active ligand stimulation of atypical chemokine receptor ACKR2. In terms of tissue distribution, widely distributed in various tissues. Not found in skeletal muscle.

It is found in the nucleus matrix. The protein localises to the cytoplasm. The protein resides in the cytoskeleton. It localises to the cell projection. Its subcellular location is the ruffle membrane. It is found in the lamellipodium membrane. The protein localises to the lamellipodium. The protein resides in the growth cone. It localises to the axon. Binds to F-actin and exhibits pH-sensitive F-actin depolymerizing activity. In conjunction with the subcortical maternal complex (SCMC), plays an essential role for zygotes to progress beyond the first embryonic cell divisions via regulation of actin dynamics. Required for the centralization of the mitotic spindle and symmetric division of zygotes. Plays a role in the regulation of cell morphology and cytoskeletal organization in epithelial cells. Required for the up-regulation of atypical chemokine receptor ACKR2 from endosomal compartment to cell membrane, increasing its efficiency in chemokine uptake and degradation. Required for neural tube morphogenesis and neural crest cell migration. This Mus musculus (Mouse) protein is Cofilin-1 (Cfl1).